Consider the following 310-residue polypeptide: Glutaminase (310 aa).

Substrate contacts are provided by Ser-67, Asn-118, Glu-161, Asn-168, Tyr-192, Tyr-244, and Val-262.

This sequence belongs to the glutaminase family. As to quaternary structure, homotetramer.

The catalysed reaction is L-glutamine + H2O = L-glutamate + NH4(+). The protein is Glutaminase of Legionella pneumophila (strain Corby).